The primary structure comprises 328 residues: 6-phosphogluconolactonase (328 aa).

This sequence belongs to the cycloisomerase 2 family.

It catalyses the reaction 6-phospho-D-glucono-1,5-lactone + H2O = 6-phospho-D-gluconate + H(+). Its pathway is carbohydrate degradation; pentose phosphate pathway; D-ribulose 5-phosphate from D-glucose 6-phosphate (oxidative stage): step 2/3. In terms of biological role, catalyzes the hydrolysis of 6-phosphogluconolactone to 6-phosphogluconate. The sequence is that of 6-phosphogluconolactonase from Xenorhabdus nematophila (strain ATCC 19061 / DSM 3370 / CCUG 14189 / LMG 1036 / NCIMB 9965 / AN6).